Consider the following 247-residue polypeptide: Cell division protein ZapD (247 aa).

This sequence belongs to the ZapD family. As to quaternary structure, interacts with FtsZ.

The protein resides in the cytoplasm. Functionally, cell division factor that enhances FtsZ-ring assembly. Directly interacts with FtsZ and promotes bundling of FtsZ protofilaments, with a reduction in FtsZ GTPase activity. The polypeptide is Cell division protein ZapD (Shigella sonnei (strain Ss046)).